A 114-amino-acid chain; its full sequence is Probable 4-amino-4-deoxy-L-arabinose-phosphoundecaprenol flippase subunit ArnE (114 aa).

Residues 39 to 112 (RSPWLWLALF…VIGGVALLGQ (74 aa)) form the EamA domain. Transmembrane regions (helical) follow at residues 41-61 (PWLWLALFALGSGLLVWLLVL), 64-84 (LPVSVAYPMLSLNFVIITLIA), and 91-111 (PVDVQHWFGVLLVIGGVALLG).

It belongs to the ArnE family. Heterodimer of ArnE and ArnF.

The protein localises to the cell inner membrane. The protein operates within bacterial outer membrane biogenesis; lipopolysaccharide biosynthesis. Its function is as follows. Translocates 4-amino-4-deoxy-L-arabinose-phosphoundecaprenol (alpha-L-Ara4N-phosphoundecaprenol) from the cytoplasmic to the periplasmic side of the inner membrane. This chain is Probable 4-amino-4-deoxy-L-arabinose-phosphoundecaprenol flippase subunit ArnE, found in Pseudomonas fluorescens (strain Pf0-1).